A 364-amino-acid chain; its full sequence is MRTDLFDFHLPPENIALRPASPREAARMLVVQGDGVLRDRIVADLPDWLEPGDQLVVNDTKVIAAQLSGRRVSRETEAKIEATLIKRLDGSRWQALVRPAKKLAPGDTIRFGHEGKVCLLGHLDATVEAKGEEGEVTLSFVFHGPALDQAIADLGRPPLPPYIAGKRPADEQDAADYQTMFAAKEGAVAAPTAGLHFTPALEQRLRARGVGLQRVTLHVGAGTFLPVKVEDTEGHRMHAEWGSLSAETAAALNEARAKGGRIVAVGTTSMRLLESAALPDGTIAPFEAETSIFITPGYRFRAVDILMTNFHLPRSTLFMLVSAFAGLETMQAAYAHAIRSGYRFYSYGDACLLFRQPDERIVEP.

It belongs to the QueA family. Monomer.

The protein resides in the cytoplasm. It catalyses the reaction 7-aminomethyl-7-carbaguanosine(34) in tRNA + S-adenosyl-L-methionine = epoxyqueuosine(34) in tRNA + adenine + L-methionine + 2 H(+). It functions in the pathway tRNA modification; tRNA-queuosine biosynthesis. Functionally, transfers and isomerizes the ribose moiety from AdoMet to the 7-aminomethyl group of 7-deazaguanine (preQ1-tRNA) to give epoxyqueuosine (oQ-tRNA). The protein is S-adenosylmethionine:tRNA ribosyltransferase-isomerase of Bradyrhizobium sp. (strain BTAi1 / ATCC BAA-1182).